We begin with the raw amino-acid sequence, 238 residues long: MDFKKEETLRRGPWLEEEDERLVKVISLLGERRWDSLAIVSGLKRSGKSCRLRWMNYLNPTLKRGPMSQEEERIIFQLHALWGNKWSKIARRLPGRTDNEIKNYWRTHYRKKQEAQNYGKLFEWRGNTGEELLHKYKETEITRTKTTSQEHGFVEVVSMESGKEANGGVGGRESFGVMKSPYENRISDWISEISTDQSEANLSEDHSSNSCSENNINIGTWWFQETRDFEEFSCSLWS.

2 consecutive HTH myb-type domains span residues 6–58 (EETL…MNYL) and 59–113 (NPTL…RKKQ). Residues 31-38 (ERRWDSLA) carry the Nuclear localization signal motif. 2 consecutive DNA-binding regions (H-T-H motif) follow at residues 34 to 58 (WDSL…MNYL) and 86 to 109 (WSKI…RTHY).

The protein localises to the nucleus. This is Transcription factor MYB27 from Arabidopsis thaliana (Mouse-ear cress).